A 257-amino-acid chain; its full sequence is Probable enoyl-CoA hydratase echA8 (257 aa).

Belongs to the enoyl-CoA hydratase/isomerase family.

The enzyme catalyses a (3S)-3-hydroxyacyl-CoA = a (2E)-enoyl-CoA + H2O. It catalyses the reaction a 4-saturated-(3S)-3-hydroxyacyl-CoA = a (3E)-enoyl-CoA + H2O. Its function is as follows. Could possibly oxidize fatty acids using specific components. The protein is Probable enoyl-CoA hydratase echA8 (echA8) of Mycobacterium leprae (strain TN).